Here is a 246-residue protein sequence, read N- to C-terminus: Exosome complex component Rrp41 (246 aa).

It belongs to the RNase PH family. Rrp41 subfamily. Component of the archaeal exosome complex. Forms a hexameric ring-like arrangement composed of 3 Rrp41-Rrp42 heterodimers. The hexameric ring associates with a trimer of Rrp4 and/or Csl4 subunits.

It is found in the cytoplasm. Functionally, catalytic component of the exosome, which is a complex involved in RNA degradation. Has 3'-&gt;5' exoribonuclease activity. Can also synthesize heteromeric RNA-tails. In Pyrobaculum neutrophilum (strain DSM 2338 / JCM 9278 / NBRC 100436 / V24Sta) (Thermoproteus neutrophilus), this protein is Exosome complex component Rrp41.